Reading from the N-terminus, the 292-residue chain is Elongation factor Ts (292 aa).

The tract at residues 79–82 (TDFV) is involved in Mg(2+) ion dislocation from EF-Tu.

Belongs to the EF-Ts family.

The protein localises to the cytoplasm. Its function is as follows. Associates with the EF-Tu.GDP complex and induces the exchange of GDP to GTP. It remains bound to the aminoacyl-tRNA.EF-Tu.GTP complex up to the GTP hydrolysis stage on the ribosome. The polypeptide is Elongation factor Ts (Malacoplasma penetrans (strain HF-2) (Mycoplasma penetrans)).